Reading from the N-terminus, the 1040-residue chain is Myoblast growth factor receptor egl-15 (1040 aa).

An N-terminal signal peptide occupies residues Met-1–Cys-19. The Extracellular portion of the chain corresponds to Ser-20–Asp-525. An Ig-like C2-type 1 domain is found at Pro-33–Glu-125. Cys-55 and Cys-109 are joined by a disulfide. N-linked (GlcNAc...) asparagine glycosylation is present at Asn-121. Positions Val-234–Lys-257 are enriched in basic and acidic residues. The segment at Val-234 to Ser-267 is disordered. Residues Asn-280 and Asn-299 are each glycosylated (N-linked (GlcNAc...) asparagine). Ig-like C2-type domains lie at Pro-287–Ile-383 and Pro-391–Thr-501. A disulfide bridge connects residues Cys-314 and Cys-367. 7 N-linked (GlcNAc...) asparagine glycosylation sites follow: Asn-401, Asn-407, Asn-433, Asn-440, Asn-449, Asn-474, and Asn-497. Cys-414 and Cys-485 are joined by a disulfide. A helical transmembrane segment spans residues Tyr-526–Cys-549. Topologically, residues Lys-550–Phe-1040 are cytoplasmic. One can recognise a Protein kinase domain in the interval Leu-640 to Met-931. ATP-binding positions include Leu-646–Val-654 and Lys-672. Asp-797 serves as the catalytic Proton acceptor. Tyr-828 bears the Phosphotyrosine; by autocatalysis mark. Disordered stretches follow at residues Glu-952–Glu-984 and Thr-1021–Phe-1040. The segment covering Pro-1022 to Phe-1040 has biased composition (polar residues).

Belongs to the protein kinase superfamily. Tyr protein kinase family. Fibroblast growth factor receptor subfamily. Requires Mg(2+) as cofactor. Activity is regulated by the phosphatase clr-1, however it is not known whether clr-1 acts directly on egl-15.

It is found in the membrane. It carries out the reaction L-tyrosyl-[protein] + ATP = O-phospho-L-tyrosyl-[protein] + ADP + H(+). Its function is as follows. Receptor tyrosine kinase required for larval development. May phosphorylate adapter protein soc-1 which in turn may result in the recruitment and/or activation of phosphatase ptp-2. May activate the Ras/MAPK kinase signaling pathway which includes sem-5, sos-1, let-60/Ras, lin-45/Raf, mek-2 and mpk-1. Acts in the hypodermis to regulate axon growth and fluid homeostasis. Activates protein degradation in muscles. Probably following interaction with ligand let-756, negatively regulates membrane protrusion from body wall muscles during larval development. Plays a role in nicotinic acetylcholine receptor (nAChR)-mediated sensitivity to nicotine. Regulates synaptic levels of nAChR subunit lev-1 in the nerve cord. In terms of biological role, affects the maintenance of axon position without affecting axon growth. Interaction with egl-17 is required for the guidance of sex myoblast migration during gonad development. Interaction with let-756 appears to play a role in maintaining body morphology at higher temperatures. In Caenorhabditis elegans, this protein is Myoblast growth factor receptor egl-15 (egl-15).